The primary structure comprises 153 residues: Arginine repressor (153 aa).

It belongs to the ArgR family.

It localises to the cytoplasm. Its pathway is amino-acid biosynthesis; L-arginine biosynthesis [regulation]. In terms of biological role, regulates arginine biosynthesis genes. This Actinobacillus pleuropneumoniae serotype 7 (strain AP76) protein is Arginine repressor.